A 475-amino-acid polypeptide reads, in one-letter code: Aspartyl/glutamyl-tRNA(Asn/Gln) amidotransferase subunit B (475 aa).

Belongs to the GatB/GatE family. GatB subfamily. As to quaternary structure, heterotrimer of A, B and C subunits.

The enzyme catalyses L-glutamyl-tRNA(Gln) + L-glutamine + ATP + H2O = L-glutaminyl-tRNA(Gln) + L-glutamate + ADP + phosphate + H(+). It carries out the reaction L-aspartyl-tRNA(Asn) + L-glutamine + ATP + H2O = L-asparaginyl-tRNA(Asn) + L-glutamate + ADP + phosphate + 2 H(+). In terms of biological role, allows the formation of correctly charged Asn-tRNA(Asn) or Gln-tRNA(Gln) through the transamidation of misacylated Asp-tRNA(Asn) or Glu-tRNA(Gln) in organisms which lack either or both of asparaginyl-tRNA or glutaminyl-tRNA synthetases. The reaction takes place in the presence of glutamine and ATP through an activated phospho-Asp-tRNA(Asn) or phospho-Glu-tRNA(Gln). The protein is Aspartyl/glutamyl-tRNA(Asn/Gln) amidotransferase subunit B of Chlorobium phaeobacteroides (strain BS1).